Here is a 235-residue protein sequence, read N- to C-terminus: Ubiquinone/menaquinone biosynthesis C-methyltransferase UbiE (235 aa).

2 residues coordinate S-adenosyl-L-methionine: threonine 60 and aspartate 81.

The protein belongs to the class I-like SAM-binding methyltransferase superfamily. MenG/UbiE family.

It catalyses the reaction a 2-demethylmenaquinol + S-adenosyl-L-methionine = a menaquinol + S-adenosyl-L-homocysteine + H(+). It carries out the reaction a 2-methoxy-6-(all-trans-polyprenyl)benzene-1,4-diol + S-adenosyl-L-methionine = a 5-methoxy-2-methyl-3-(all-trans-polyprenyl)benzene-1,4-diol + S-adenosyl-L-homocysteine + H(+). Its pathway is quinol/quinone metabolism; menaquinone biosynthesis; menaquinol from 1,4-dihydroxy-2-naphthoate: step 2/2. It participates in cofactor biosynthesis; ubiquinone biosynthesis. Its function is as follows. Methyltransferase required for the conversion of demethylmenaquinol (DMKH2) to menaquinol (MKH2) and the conversion of 2-polyprenyl-6-methoxy-1,4-benzoquinol (DDMQH2) to 2-polyprenyl-3-methyl-6-methoxy-1,4-benzoquinol (DMQH2). In Geotalea daltonii (strain DSM 22248 / JCM 15807 / FRC-32) (Geobacter daltonii), this protein is Ubiquinone/menaquinone biosynthesis C-methyltransferase UbiE.